Reading from the N-terminus, the 479-residue chain is Odorant receptor coreceptor (479 aa).

Topologically, residues Met-1–Phe-43 are cytoplasmic. The helical transmembrane segment at Cys-44–Ile-64 threads the bilayer. The Extracellular portion of the chain corresponds to Glu-65–Thr-73. Residues Ala-74–Val-94 traverse the membrane as a helical segment. Over Arg-95–Leu-133 the chain is Cytoplasmic. Residues Leu-134 to Phe-154 traverse the membrane as a helical segment. Residues Glu-155–Gly-190 lie on the Extracellular side of the membrane. Residue Asn-167 is glycosylated (N-linked (GlcNAc...) asparagine). The helical transmembrane segment at Ile-191–Ala-211 threads the bilayer. The Cytoplasmic segment spans residues Asn-212 to Asp-350. A disordered region spans residues Ser-261–Gly-280. The chain crosses the membrane as a helical span at residues Ala-351–Ala-371. Topologically, residues Tyr-372 to Tyr-383 are extracellular. The chain crosses the membrane as a helical span at residues Ala-384–Phe-404. Residues Gly-405–Thr-455 are Cytoplasmic-facing. Residues Val-456–Val-476 traverse the membrane as a helical segment. The Extracellular portion of the chain corresponds to Gln-477 to Lys-479.

This sequence belongs to the insect chemoreceptor superfamily. Heteromeric odorant receptor channel (TC 1.A.69) family. Orco subfamily. As to quaternary structure, heterodimer with conventional odorant receptors (ORs).

It is found in the cell membrane. Its function is as follows. Odorant coreceptor which complexes with conventional odorant receptors (ORs) to form odorant-sensing units, providing sensitive and prolonged odorant signaling and calcium permeability. Obligate coreceptor of all odorant receptors. Orco is a universal and integral part of the functional odorant receptor, involved in the dendritic localization of other olfactory receptors. Can form functional ion channels in the absence of an odor-binding odorant receptor. Plays a central role in the perception of olfactory stimuli in ants and is essential for ant social organization. Required for pheromone sensing and mating behavior. Also required for the development and maintenance of odorant receptor neurons (ORNs) and of antennal lobe glomeruli. The sequence is that of Odorant receptor coreceptor from Harpegnathos saltator (Jerdon's jumping ant).